The following is a 201-amino-acid chain: Rho GDP-dissociation inhibitor 2 (201 aa).

The segment at 1 to 38 (MTEKAPEPHVEEDDDDELDSKLNYKPPPQKSLKELQEM) is disordered. Residue Thr-2 is modified to N-acetylthreonine. Lys-21 carries the N6-acetyllysine modification. Tyr-24 is modified (phosphotyrosine). N6-acetyllysine occurs at positions 25, 40, 47, 102, and 124. Position 145 is a phosphoserine (Ser-145). Position 175 is an N6-acetyllysine (Lys-175).

Belongs to the Rho GDI family. In terms of assembly, interacts with RHOA. Interacts with RAC1. Interacts with RAC2. Interacts with CDC42. In terms of tissue distribution, detected in bone marrow, thymus and spleen.

It localises to the cytoplasm. The protein resides in the cytosol. In terms of biological role, regulates the GDP/GTP exchange reaction of the Rho proteins by inhibiting the dissociation of GDP from them, and the subsequent binding of GTP to them. Regulates reorganization of the actin cytoskeleton mediated by Rho family members. The protein is Rho GDP-dissociation inhibitor 2 (ARHGDIB) of Homo sapiens (Human).